Reading from the N-terminus, the 229-residue chain is Ribonuclease 3 (229 aa).

One can recognise an RNase III domain in the interval 7-132; the sequence is ISAFCDRIGH…VIAAVYRDAG (126 aa). Mg(2+) is bound at residue Glu45. Asp49 is a catalytic residue. Mg(2+) is bound by residues Asp118 and Glu121. Residue Glu121 is part of the active site. The region spanning 157–226 is the DRBM domain; the sequence is DPKTALQEWA…AKALLAQVES (70 aa).

This sequence belongs to the ribonuclease III family. In terms of assembly, homodimer. Requires Mg(2+) as cofactor.

The protein localises to the cytoplasm. It carries out the reaction Endonucleolytic cleavage to 5'-phosphomonoester.. Functionally, digests double-stranded RNA. Involved in the processing of primary rRNA transcript to yield the immediate precursors to the large and small rRNAs (23S and 16S). Processes some mRNAs, and tRNAs when they are encoded in the rRNA operon. Processes pre-crRNA and tracrRNA of type II CRISPR loci if present in the organism. This chain is Ribonuclease 3, found in Dinoroseobacter shibae (strain DSM 16493 / NCIMB 14021 / DFL 12).